Here is a 375-residue protein sequence, read N- to C-terminus: Growth/differentiation factor 8 (375 aa).

The N-terminal stretch at M1 to L23 is a signal peptide. Positions N24 to R266 are excised as a propeptide. N71 carries N-linked (GlcNAc...) asparagine glycosylation. 4 cysteine pairs are disulfide-bonded: C272-C282, C281-C340, C309-C372, and C313-C374.

Belongs to the TGF-beta family. In terms of assembly, homodimer; disulfide-linked. Interacts with WFIKKN2, leading to inhibit its activity. Interacts with FST3. In terms of processing, synthesized as large precursor molecule that undergoes proteolytic cleavage to generate an N-terminal propeptide and a disulfide linked C-terminal dimer, which is the biologically active molecule. The circulating form consists of a latent complex of the C-terminal dimer and other proteins, including its propeptide, which maintain the C-terminal dimer in a latent, inactive state. Ligand activation requires additional cleavage of the prodomain by a tolloid-like metalloproteinase.

It localises to the secreted. Acts specifically as a negative regulator of skeletal muscle growth. The polypeptide is Growth/differentiation factor 8 (MSTN) (Homo sapiens (Human)).